Here is a 465-residue protein sequence, read N- to C-terminus: Sushi repeat-containing protein SRPX2 (465 aa).

The first 23 residues, 1–23 (MASQLTQRGALFLLFFLTPAVTP), serve as a signal peptide directing secretion. Sushi domains are found at residues 69 to 119 (ATCY…YCRQ), 120 to 178 (MRCH…VCVD), and 262 to 321 (RRCP…ICAP). 4 disulfide bridges follow: C71–C105, C91–C117, C122–C163, and C149–C176. An HYR domain is found at 177–261 (VDIDPPKIRC…SCKFIVKVQV (85 aa)). 2 cysteine pairs are disulfide-bonded: C264–C306 and C292–C319.

In terms of assembly, forms homooligomers. Interacts with PLAUR (via the UPAR/Ly6 domains), ADAMTS4 and CTSB. Interacts with HGF; the interaction increases the mitogenic activity of HGF. In terms of processing, contains chondroitin sulfate chains. In terms of tissue distribution, expressed in neurons of the rolandic area of the brain (at protein level). Highly expressed in the brain, placenta, lung, trachea, uterus, adrenal gland, heart, ovary and placenta. Weakly expressed in the peripheral blood, brain and bone marrow. Expressed in numerous cancer cell lines and in gastrointestinal cancer cells. Higher levels found in colorectal cancers than in normal colonic mucosa.

Its subcellular location is the secreted. The protein resides in the cytoplasm. It is found in the cell surface. It localises to the synapse. In terms of biological role, acts as a ligand for the urokinase plasminogen activator surface receptor. Plays a role in angiogenesis by inducing endothelial cell migration and the formation of vascular network (cords). Involved in cellular migration and adhesion. Increases the phosphorylation levels of FAK. Interacts with and increases the mitogenic activity of HGF. Promotes synapse formation. May have a role in the perisylvian region, critical for language and cognitive development. This is Sushi repeat-containing protein SRPX2 (SRPX2) from Homo sapiens (Human).